Here is a 451-residue protein sequence, read N- to C-terminus: Tryptophan--tRNA ligase (451 aa).

Residues 10–12 and 18–19 contribute to the ATP site; these read TTT and GN. The 'HIGH' region signature appears at 11–19; the sequence is TTGTPHLGN. Residue aspartate 143 coordinates L-tryptophan. Residues 155–157, leucine 195, and 202–206 contribute to the ATP site; these read GRD and KMSKS. Positions 202–206 match the 'KMSKS' region motif; the sequence is KMSKS.

Belongs to the class-I aminoacyl-tRNA synthetase family. Homodimer.

It localises to the cytoplasm. The catalysed reaction is tRNA(Trp) + L-tryptophan + ATP = L-tryptophyl-tRNA(Trp) + AMP + diphosphate + H(+). Functionally, catalyzes the attachment of tryptophan to tRNA(Trp). This chain is Tryptophan--tRNA ligase, found in Bordetella bronchiseptica (strain ATCC BAA-588 / NCTC 13252 / RB50) (Alcaligenes bronchisepticus).